The following is a 401-amino-acid chain: Dual-specificity RNA methyltransferase RlmN (401 aa).

E114 (proton acceptor) is an active-site residue. The Radical SAM core domain occupies 120–365 (DKGRGTLCVS…TMVRRTRGDD (246 aa)). C127 and C370 form a disulfide bridge. [4Fe-4S] cluster contacts are provided by C134, C138, and C141. Residues 187–188 (GE), S219, 241–243 (SLH), and N327 contribute to the S-adenosyl-L-methionine site. Residue C370 is the S-methylcysteine intermediate of the active site.

The protein belongs to the radical SAM superfamily. RlmN family. [4Fe-4S] cluster serves as cofactor.

The protein resides in the cytoplasm. The catalysed reaction is adenosine(2503) in 23S rRNA + 2 reduced [2Fe-2S]-[ferredoxin] + 2 S-adenosyl-L-methionine = 2-methyladenosine(2503) in 23S rRNA + 5'-deoxyadenosine + L-methionine + 2 oxidized [2Fe-2S]-[ferredoxin] + S-adenosyl-L-homocysteine. It carries out the reaction adenosine(37) in tRNA + 2 reduced [2Fe-2S]-[ferredoxin] + 2 S-adenosyl-L-methionine = 2-methyladenosine(37) in tRNA + 5'-deoxyadenosine + L-methionine + 2 oxidized [2Fe-2S]-[ferredoxin] + S-adenosyl-L-homocysteine. Specifically methylates position 2 of adenine 2503 in 23S rRNA and position 2 of adenine 37 in tRNAs. m2A2503 modification seems to play a crucial role in the proofreading step occurring at the peptidyl transferase center and thus would serve to optimize ribosomal fidelity. The chain is Dual-specificity RNA methyltransferase RlmN from Xanthomonas campestris pv. campestris (strain B100).